Reading from the N-terminus, the 131-residue chain is Small ribosomal subunit protein bS18 (131 aa).

Over residues 1–10 the composition is skewed to polar residues; sequence MSNGTDSKTA. The tract at residues 1 to 60 is disordered; it reads MSNGTDSKTASAPPARSGGGFGGGGSRGGDRGDRGDRGGDRGDRGGGLGGDDDKRGGGRG. A compositionally biased stretch (gly residues) spans 17–27; sequence SGGGFGGGGSR. A compositionally biased stretch (basic and acidic residues) spans 28–44; it reads GGDRGDRGDRGGDRGDR.

It belongs to the bacterial ribosomal protein bS18 family. As to quaternary structure, part of the 30S ribosomal subunit. Forms a tight heterodimer with protein bS6.

In terms of biological role, binds as a heterodimer with protein bS6 to the central domain of the 16S rRNA, where it helps stabilize the platform of the 30S subunit. The sequence is that of Small ribosomal subunit protein bS18 from Myxococcus xanthus (strain DK1622).